We begin with the raw amino-acid sequence, 278 residues long: Protein NIF3 homolog (278 aa).

This sequence belongs to the GTP cyclohydrolase I type 2/NIF3 family.

The chain is Protein NIF3 homolog from Schizosaccharomyces pombe (strain 972 / ATCC 24843) (Fission yeast).